A 232-amino-acid polypeptide reads, in one-letter code: Sugar fermentation stimulation protein homolog (232 aa).

The protein belongs to the SfsA family.

The protein is Sugar fermentation stimulation protein homolog of Pelagibacter ubique (strain HTCC1062).